The sequence spans 411 residues: Squalene synthase (411 aa).

A run of 2 helical transmembrane segments spans residues Ser281–Tyr301 and Ser388–Gly408.

The protein belongs to the phytoene/squalene synthase family. Mg(2+) serves as cofactor.

Its subcellular location is the endoplasmic reticulum membrane. The catalysed reaction is 2 (2E,6E)-farnesyl diphosphate + NADPH + H(+) = squalene + 2 diphosphate + NADP(+). It catalyses the reaction 2 (2E,6E)-farnesyl diphosphate + NADH + H(+) = squalene + 2 diphosphate + NAD(+). It participates in terpene metabolism; lanosterol biosynthesis; lanosterol from farnesyl diphosphate: step 1/3. This chain is Squalene synthase, found in Nicotiana benthamiana.